Here is a 476-residue protein sequence, read N- to C-terminus: MSNTSDLSPVHVVGGGLAGSEAAWQLAQAGVPVILHEMRPVRGTDAHKTEQLAELVCSNSFRSDDAETNAVGVLHAEMRLAGSLIMACADAHQVPAGGALAVDREGFSQAVTAKLEAHPLITIVREEVTGLPPEEWGTTIVATGPLTAPSLAEAIQAQTGADALAFFDAIAPIIHFDSINMDVCWFQSRYDKVGPGGTGKDYINCPMDKEQYEAFVAALVEGDKTDFKEWEGTPYFDGCLPIEVMAERGPETLRHGPMKPMGLTNAHNPTVKAYAVVQLRQDNALGTLYNMVGFQTKLKYGSQTGIFKMIPGLENAEFARLGGLHRNTYLNSPVLLDGTLRLKSRETLRFAGQVTGCEGYVESSAIGLLAGRFTAAEKLGQTLTPPPGTTAFGALLGHITGGHIVADDEPGKRSFQPMNVNFGLFPPVDVPKPEGKRLRGKEKTVAKKRALSARALADCRQWLGLLGLGSGLEPAE.

14–19 (GGGLAG) provides a ligand contact to FAD.

Belongs to the MnmG family. TrmFO subfamily. It depends on FAD as a cofactor.

It localises to the cytoplasm. The enzyme catalyses uridine(54) in tRNA + (6R)-5,10-methylene-5,6,7,8-tetrahydrofolate + NADH + H(+) = 5-methyluridine(54) in tRNA + (6S)-5,6,7,8-tetrahydrofolate + NAD(+). It catalyses the reaction uridine(54) in tRNA + (6R)-5,10-methylene-5,6,7,8-tetrahydrofolate + NADPH + H(+) = 5-methyluridine(54) in tRNA + (6S)-5,6,7,8-tetrahydrofolate + NADP(+). Functionally, catalyzes the folate-dependent formation of 5-methyl-uridine at position 54 (M-5-U54) in all tRNAs. This chain is Methylenetetrahydrofolate--tRNA-(uracil-5-)-methyltransferase TrmFO, found in Brucella anthropi (strain ATCC 49188 / DSM 6882 / CCUG 24695 / JCM 21032 / LMG 3331 / NBRC 15819 / NCTC 12168 / Alc 37) (Ochrobactrum anthropi).